Consider the following 369-residue polypeptide: Phosphate-binding protein PstS 3 (369 aa).

The first 21 residues, 1 to 21 (MKLNQFGAAIGLLATGALLSG), serve as a signal peptide directing secretion. Residue cysteine 22 is the site of N-palmitoyl cysteine attachment. A lipid anchor (S-diacylglycerol cysteine) is attached at cysteine 22. Phosphate is bound by residues 55–57 (STA), serine 85, aspartate 103, and 190–192 (SGT).

Belongs to the PstS family. As to quaternary structure, the complex is composed of two ATP-binding proteins (PstB), two transmembrane proteins (PstC and PstA) and a solute-binding protein (PstS).

It localises to the cell membrane. Functionally, part of the ABC transporter complex PstSACB involved in phosphate import. This chain is Phosphate-binding protein PstS 3 (pstS2), found in Mycobacterium leprae (strain TN).